Reading from the N-terminus, the 1032-residue chain is ATPase MORC2 (1032 aa).

A2 carries the post-translational modification N-acetylalanine. Residues N39, 87 to 89, and 99 to 105 contribute to the ATP site; these read SAK and QYGNGLK. N39 is a binding site for Mg(2+). Residues 282-362 adopt a coiled-coil conformation; it reads SRFKTRAEQE…KEAKQRALKE (81 aa). K427 lines the ATP pocket. The CW-type zinc finger occupies 490 to 544; the sequence is AMEIPTTIQCDLCLKWRTLPFQLSSVEKDYPDTWVCSMNPDPEQDRCEASEQKQK. C499, C502, C525, and C536 together coordinate Zn(2+). 2 disordered regions span residues 530 to 563 and 577 to 793; these read DPEQ…KQKQ and ALQK…RAQK. 2 stretches are compositionally biased toward basic and acidic residues: residues 532–543 and 550–563; these read EQDRCEASEQKQ and FRKD…KQKQ. A coiled-coil region spans residues 547 to 584; that stretch reads LGTFRKDMKTQEEKQKQLTEKIRQQQEKLEALQKTTPI. A Phosphothreonine modification is found at T582. A phosphoserine mark is found at S602 and S615. The segment covering 627-638 has biased composition (pro residues); sequence SRPPSLPTPRPA. Residue K652 forms a Glycyl lysine isopeptide (Lys-Gly) (interchain with G-Cter in SUMO2) linkage. Over residues 690–704 the composition is skewed to low complexity; the sequence is PLVQQLSPSLLPNSK. Position 696 is a phosphoserine (S696). Residue K704 forms a Glycyl lysine isopeptide (Lys-Gly) (interchain with G-Cter in SUMO2) linkage. The residue at position 705 (S705) is a Phosphoserine. Residues 711 to 720 are compositionally biased toward low complexity; the sequence is SPKVIKTPVV. Residue K716 forms a Glycyl lysine isopeptide (Lys-Gly) (interchain with G-Cter in SUMO2) linkage. Phosphoserine occurs at positions 725 and 730. The residue at position 733 (T733) is a Phosphothreonine. S739 carries the phosphoserine; by PAK1 modification. A coiled-coil region spans residues 741–761; it reads AVSDEEEVEEEAERRKERCKR. S743 carries the post-translational modification Phosphoserine. The segment covering 765 to 774 has biased composition (basic and acidic residues); the sequence is VVKEEKKDSN. Residue K767 forms a Glycyl lysine isopeptide (Lys-Gly) (interchain with G-Cter in SUMO2) linkage. Residues S777 and S779 each carry the phosphoserine modification. A Glycyl lysine isopeptide (Lys-Gly) (interchain with G-Cter in SUMO2) cross-link involves residue K819. Positions 850 to 870 are disordered; sequence RLMKPPSPEHQSLDTQQEGGE. K932 participates in a covalent cross-link: Glycyl lysine isopeptide (Lys-Gly) (interchain with G-Cter in SUMO2). Residues 966-1016 adopt a coiled-coil conformation; sequence QSRADSRAKASEESLRTSERKLRETEEKLQKLRTNIVALLQKVQEDIDINT.

Homodimerizes upon ATP-binding and dissociate upon ATP hydrolysis; homodimerization is required for gene silencing. Interacts with HDAC4. Interacts with ACLY. Interacts with TASOR and MPHOSPH8; the interactions associate MORC2 with the HUSH complex which recruits MORC2 to heterochromatic loci. Phosphorylated by PAK1 at Ser-739 upon DNA damage. Phosphorylation is required for ATPase activity and recruitment to damaged chromatin. In terms of tissue distribution, highly expressed in smooth muscle, pancreas and testis.

Its subcellular location is the nucleus. The protein resides in the cytoplasm. It localises to the cytosol. It is found in the chromosome. The protein localises to the nucleus matrix. It carries out the reaction ATP + H2O = ADP + phosphate + H(+). ATPase activity is dependent of phosphorylation by PAK1 and presence of DNA. Essential for epigenetic silencing by the HUSH (human silencing hub) complex. Recruited by HUSH to target site in heterochromatin, the ATPase activity and homodimerization are critical for HUSH-mediated silencing. Represses germ cell-related genes and L1 retrotransposons in collaboration with SETDB1 and the HUSH complex, the silencing is dependent of repressive epigenetic modifications, such as H3K9me3 mark. Silencing events often occur within introns of transcriptionally active genes, and lead to the down-regulation of host gene expression. During DNA damage response, regulates chromatin remodeling through ATP hydrolysis. Upon DNA damage, is phosphorylated by PAK1, both colocalize to chromatin and induce H2AX expression. ATPase activity is required and dependent of phosphorylation by PAK1 and presence of DNA. Recruits histone deacetylases, such as HDAC4, to promoter regions, causing local histone H3 deacetylation and transcriptional repression of genes such as CA9. Exhibits a cytosolic function in lipogenesis, adipogenic differentiation, and lipid homeostasis by increasing the activity of ACLY, possibly preventing its dephosphorylation. This Homo sapiens (Human) protein is ATPase MORC2.